The sequence spans 165 residues: Cytochrome c-550-like protein (165 aa).

The N-terminal stretch at 1–38 is a signal peptide; it reads MPHLDQKLPMRWRIPSRLWAWVGILALLWLGLASPVAA. Heme c is bound by residues C83, C86, H87, and C137.

The protein belongs to the cytochrome c family. PsbV subfamily. Heme c serves as cofactor.

Its subcellular location is the cellular thylakoid membrane. Functionally, possible low-potential cytochrome c. This Synechococcus sp. (strain JA-2-3B'a(2-13)) (Cyanobacteria bacterium Yellowstone B-Prime) protein is Cytochrome c-550-like protein (psbV2).